The chain runs to 215 residues: Ion-translocating oxidoreductase complex subunit G (215 aa).

A helical membrane pass occupies residues 9-29 (GLLLSGFALICTAAVALVNEA). The residue at position 176 (T176) is an FMN phosphoryl threonine.

Belongs to the RnfG family. As to quaternary structure, the complex is composed of six subunits: RnfA, RnfB, RnfC, RnfD, RnfE and RnfG. Requires FMN as cofactor.

Its subcellular location is the cell inner membrane. Part of a membrane-bound complex that couples electron transfer with translocation of ions across the membrane. This Shewanella amazonensis (strain ATCC BAA-1098 / SB2B) protein is Ion-translocating oxidoreductase complex subunit G.